The sequence spans 501 residues: Lysine--tRNA ligase (501 aa).

Residues Glu411 and Glu418 each contribute to the Mg(2+) site.

Belongs to the class-II aminoacyl-tRNA synthetase family. In terms of assembly, homodimer. Mg(2+) serves as cofactor.

It is found in the cytoplasm. It carries out the reaction tRNA(Lys) + L-lysine + ATP = L-lysyl-tRNA(Lys) + AMP + diphosphate. In Pseudomonas aeruginosa (strain ATCC 15692 / DSM 22644 / CIP 104116 / JCM 14847 / LMG 12228 / 1C / PRS 101 / PAO1), this protein is Lysine--tRNA ligase.